Reading from the N-terminus, the 180-residue chain is MANKLFLVSATLAFFFLLTNASIYRTIVEVDEDDATNPAGPFRIPKCRKEFQQAQHLKACQQWLHKQAMQSGSGPSWTLDGEFDFEDDMENPQGPQQRPPLLQQCCNELHQEEPLCVCPTLKGASKAVKQQVRQQQGQQGQQLQQVISRIYQTATHLPKVCNIPQVSVCPFQKTMPGPSY.

The signal sequence occupies residues 1 to 21 (MANKLFLVSATLAFFFLLTNA). 2 propeptides span residues 22–38 (SIYR…ATNP) and 75–94 (PSWT…NPQG).

It belongs to the 2S seed storage albumins family. The mature protein consists of a small and a large chain linked by disulfide bonds. Cotyledons and the axis.

Functionally, the small, basic, water-soluble napins are one of the two major kinds of storage proteins synthesized in the seed during its maturation. This Brassica napus (Rape) protein is Napin (NAP1).